A 524-amino-acid polypeptide reads, in one-letter code: 2-isopropylmalate synthase (524 aa).

Positions 12–274 constitute a Pyruvate carboxyltransferase domain; that stretch reads VIIFDTTLRD…WNNIETTMLT (263 aa). 4 residues coordinate Mn(2+): aspartate 21, histidine 209, histidine 211, and asparagine 245. The segment at 398–524 is regulatory domain; sequence KLNSLTVIAG…EAVPAVAAAG (127 aa).

Belongs to the alpha-IPM synthase/homocitrate synthase family. LeuA type 1 subfamily. In terms of assembly, homodimer. The cofactor is Mn(2+).

It is found in the cytoplasm. It carries out the reaction 3-methyl-2-oxobutanoate + acetyl-CoA + H2O = (2S)-2-isopropylmalate + CoA + H(+). It participates in amino-acid biosynthesis; L-leucine biosynthesis; L-leucine from 3-methyl-2-oxobutanoate: step 1/4. Functionally, catalyzes the condensation of the acetyl group of acetyl-CoA with 3-methyl-2-oxobutanoate (2-ketoisovalerate) to form 3-carboxy-3-hydroxy-4-methylpentanoate (2-isopropylmalate). The protein is 2-isopropylmalate synthase of Rhodopseudomonas palustris (strain HaA2).